Reading from the N-terminus, the 144-residue chain is 3-hydroxyacyl-[acyl-carrier-protein] dehydratase FabZ (144 aa).

H48 is an active-site residue.

It belongs to the thioester dehydratase family. FabZ subfamily.

The protein resides in the cytoplasm. The enzyme catalyses a (3R)-hydroxyacyl-[ACP] = a (2E)-enoyl-[ACP] + H2O. In terms of biological role, involved in unsaturated fatty acids biosynthesis. Catalyzes the dehydration of short chain beta-hydroxyacyl-ACPs and long chain saturated and unsaturated beta-hydroxyacyl-ACPs. This chain is 3-hydroxyacyl-[acyl-carrier-protein] dehydratase FabZ, found in Chloroflexus aggregans (strain MD-66 / DSM 9485).